The primary structure comprises 423 residues: Imidazolonepropionase (423 aa).

Residues His-87 and His-89 each contribute to the Fe(3+) site. Positions 87 and 89 each coordinate Zn(2+). 4-imidazolone-5-propanoate is bound by residues Arg-96, Tyr-159, and His-192. Tyr-159 is a binding site for N-formimidoyl-L-glutamate. Residue His-257 coordinates Fe(3+). His-257 serves as a coordination point for Zn(2+). Glu-260 contributes to the 4-imidazolone-5-propanoate binding site. Asp-331 contributes to the Fe(3+) binding site. Asp-331 lines the Zn(2+) pocket. The N-formimidoyl-L-glutamate site is built by Asn-333 and Gly-335. Ser-336 contributes to the 4-imidazolone-5-propanoate binding site.

It belongs to the metallo-dependent hydrolases superfamily. HutI family. The cofactor is Zn(2+). Requires Fe(3+) as cofactor.

Its subcellular location is the cytoplasm. The catalysed reaction is 4-imidazolone-5-propanoate + H2O = N-formimidoyl-L-glutamate. Its pathway is amino-acid degradation; L-histidine degradation into L-glutamate; N-formimidoyl-L-glutamate from L-histidine: step 3/3. Catalyzes the hydrolytic cleavage of the carbon-nitrogen bond in imidazolone-5-propanoate to yield N-formimidoyl-L-glutamate. It is the third step in the universal histidine degradation pathway. The protein is Imidazolonepropionase of Porphyromonas gingivalis (strain ATCC BAA-308 / W83).